The sequence spans 260 residues: Small ribosomal subunit protein uS2 (260 aa).

The tract at residues 223–260 is disordered; that stretch reads EGRQGEDEEEASQEVAEGVSKDSLEDLKKSVEEGSNEE. Basic and acidic residues predominate over residues 241 to 254; sequence VSKDSLEDLKKSVE.

The protein belongs to the universal ribosomal protein uS2 family.

The chain is Small ribosomal subunit protein uS2 from Pediococcus pentosaceus (strain ATCC 25745 / CCUG 21536 / LMG 10740 / 183-1w).